The sequence spans 573 residues: uncharacterized protein (573 aa).

Disordered regions lie at residues 1 to 33 and 60 to 101; these read MLQQGSSSRRSLHGNDFHTLTSPSRRDSLSIPR and LVAN…SRYD. Positions 60 to 70 are enriched in polar residues; the sequence is LVANRSDNNGN. N63 is a glycosylation site (N-linked (GlcNAc...) asparagine). Low complexity predominate over residues 84–95; that stretch reads SSSTSSLPSTRN. 10 tandem repeats follow at residues 102 to 103, 104 to 105, 106 to 107, 108 to 109, 110 to 111, 112 to 113, 114 to 115, 116 to 117, 118 to 119, and 120 to 121. Residues 102–121 are 10 X 2 AA tandem repeats of N-M; it reads NMNMNMNMNMNMNMNMNMNM. Residue N123 is glycosylated (N-linked (GlcNAc...) asparagine). 4 disordered regions span residues 150 to 174, 192 to 271, 286 to 317, and 357 to 379; these read IPEKYSGSRYSLRSSPPTYSNPRVR, QFPN…IRSN, KSSNSADSVEENSKTKQKRKNPERVVPEPITS, and NNRIPVLPPPRSPNRPTLSDKRT. The segment covering 157–170 has biased composition (polar residues); the sequence is SRYSLRSSPPTYSN. Positions 208 to 225 are enriched in low complexity; sequence LPPSSTFPDSPSSSSLPL. A compositionally biased stretch (polar residues) spans 226–252; that stretch reads TQTGGPSSADNDSIATGTNNRSPQQTK. N236 carries N-linked (GlcNAc...) asparagine glycosylation. N-linked (GlcNAc...) asparagine glycans are attached at residues N437 and N442. Composition is skewed to low complexity over residues 441 to 457 and 466 to 483; these read INSSISSPAPSSSSSSS and SISSSPTPAPSSGSSKSK. The tract at residues 441–483 is disordered; the sequence is INSSISSPAPSSSSSSSLVSRGPMQSISSSPTPAPSSGSSKSK. N-linked (GlcNAc...) asparagine glycans are attached at residues N498, N535, and N541.

It to yeast AFR1. In terms of processing, N-glycosylated.

This is an uncharacterized protein from Saccharomyces cerevisiae (strain ATCC 204508 / S288c) (Baker's yeast).